Here is a 602-residue protein sequence, read N- to C-terminus: MFS-type efflux transporter pyiT (602 aa).

Residues 1 to 33 (MEKAKDSLPTTGDPVPSQGTINPVDETGGSASD) form a disordered region. 7 helical membrane-spanning segments follow: residues 43-63 (FWFT…EGSV), 123-143 (WLTI…GGAT), 156-176 (GLGS…LLPL), 185-205 (IIFM…GILV), 212-232 (WVFY…FFFL), 251-271 (FFGN…LTYG), and 282-302 (IIVS…FEAS). Residue asparagine 317 is glycosylated (N-linked (GlcNAc...) asparagine). A run of 6 helical transmembrane segments spans residues 325–345 (IATF…PLYF), 357–377 (GVML…GGAL), 386–406 (NIHF…TILN), 410–430 (SLAV…VPTA), 451–471 (TFAF…AAIF), and 524–544 (LERV…VIFL). The span at 564-585 (IPQTAADNSASRPNTINDTASQ) shows a compositional bias: polar residues. The tract at residues 564-602 (IPQTAADNSASRPNTINDTASQAPILKQRRSTNQERETV) is disordered. N-linked (GlcNAc...) asparagine glycosylation occurs at asparagine 580.

It belongs to the major facilitator superfamily.

Its subcellular location is the cell membrane. In terms of biological role, MFS-type efflux transporter; part of the gene cluster that mediates the biosynthesis of the mycotoxin pyrichalasin H, a tyrosine-derived cytochalasan that inhibits the growth of rice seedlings, but also inhibits lymphocyte capping and actin polymerization and alters cell morphology. Pyrichalasin H is indicated as the responsible agent for the genus-specific pathogenicity of M.grisea toward crabgrass. PyiT might be involved in the excretion of pyrichalasin H. The protein is MFS-type efflux transporter pyiT of Pyricularia grisea (Crabgrass-specific blast fungus).